A 450-amino-acid polypeptide reads, in one-letter code: 23S rRNA (uracil(1939)-C(5))-methyltransferase RlmD (450 aa).

Residues serine 12–lysine 70 form the TRAM domain. Positions 83, 89, 92, and 171 each coordinate [4Fe-4S] cluster. Positions 283, 312, 317, 333, 360, and 380 each coordinate S-adenosyl-L-methionine. Residue cysteine 406 is the Nucleophile of the active site.

The protein belongs to the class I-like SAM-binding methyltransferase superfamily. RNA M5U methyltransferase family. RlmD subfamily.

The enzyme catalyses uridine(1939) in 23S rRNA + S-adenosyl-L-methionine = 5-methyluridine(1939) in 23S rRNA + S-adenosyl-L-homocysteine + H(+). Catalyzes the formation of 5-methyl-uridine at position 1939 (m5U1939) in 23S rRNA. The polypeptide is 23S rRNA (uracil(1939)-C(5))-methyltransferase RlmD (Shewanella putrefaciens (strain CN-32 / ATCC BAA-453)).